Reading from the N-terminus, the 765-residue chain is Protein PAT1 homolog 1 (765 aa).

3 disordered regions span residues 1–98, 119–147, and 210–244; these read MFRF…DERG, GVGS…LAGP, and LPNR…SPPV. The span at 7–30 shows a compositional bias: acidic residues; sequence LDDDCTLEEEEGLVEEEDEIDQFN. The segment covering 45–59 has biased composition (basic and acidic residues); the sequence is EEHTRLAELDERVRD. A compositionally biased stretch (basic and acidic residues) spans 218-227; sequence SRDEGRDLSE. S235 and S236 each carry phosphoserine. The segment covering 235–244 has biased composition (low complexity); sequence SSPVIGSPPV.

This sequence belongs to the PAT1 family. As to quaternary structure, interacts with ribonucleoprotein complex components.

It is found in the cytoplasm. Its subcellular location is the P-body. It localises to the nucleus. The protein resides in the PML body. The protein localises to the nucleus speckle. Functionally, RNA-binding protein involved in deadenylation-dependent decapping of mRNAs, leading to the degradation of mRNAs. Acts as a scaffold protein that connects deadenylation and decapping machinery. Required for cytoplasmic mRNA processing body (P-body) assembly. The protein is Protein PAT1 homolog 1 (patl1) of Danio rerio (Zebrafish).